The sequence spans 75 residues: Porwaprin-d (75 aa).

An N-terminal signal peptide occupies residues Met-1 to Ser-24. The 46-residue stretch at Arg-27–Ile-72 folds into the WAP domain. Intrachain disulfides connect Cys-34/Cys-60, Cys-43/Cys-64, Cys-47/Cys-59, and Cys-53/Cys-68.

The protein belongs to the venom waprin family. In terms of tissue distribution, expressed by the venom gland.

The protein localises to the secreted. In terms of biological role, damages membranes of susceptible bacteria. Has no hemolytic activity. Not toxic to mice. Does not inhibit the proteinases elastase and cathepsin G. The sequence is that of Porwaprin-d from Pseudechis porphyriacus (Red-bellied black snake).